The following is a 149-amino-acid chain: Nucleoside diphosphate kinase (149 aa).

ATP is bound by residues Lys9, Phe57, Arg85, Thr91, Arg102, and Asn112. His115 (pros-phosphohistidine intermediate) is an active-site residue.

Belongs to the NDK family. As to quaternary structure, homotetramer. The cofactor is Mg(2+).

Its subcellular location is the cytoplasm. It carries out the reaction a 2'-deoxyribonucleoside 5'-diphosphate + ATP = a 2'-deoxyribonucleoside 5'-triphosphate + ADP. It catalyses the reaction a ribonucleoside 5'-diphosphate + ATP = a ribonucleoside 5'-triphosphate + ADP. Its function is as follows. Major role in the synthesis of nucleoside triphosphates other than ATP. The ATP gamma phosphate is transferred to the NDP beta phosphate via a ping-pong mechanism, using a phosphorylated active-site intermediate. This is Nucleoside diphosphate kinase from Pelotomaculum thermopropionicum (strain DSM 13744 / JCM 10971 / SI).